The following is a 630-amino-acid chain: MTVEANKETLGFQTEVKQLLHLMIHSLYSNKEIFLRELISNASDAEDKLRFAALKDDKLFEGDSDLKIRLDYDKDAGTITIADNGIGMTRDDVIANLGTIAKSGTAEFLKQLSGDEKKDSKLIGQFGVGFYSAFIVADKVEVFTRKAGEPADNGVHWESKGDGEFTIEPVSREQRGTEIVLHLKPEDKEFADGWKLRSLVKKYSDHISFPVVMKSESEEEDKKGEEETVNDATALWTLPRTEIKDEEYKEFYKHIAHDFEDPLTWSHNKVEGKLDYTSLLYIPKRAPFDLYNREAPRGLKLYVQRVFIMDDAEQFLPLYLRFTKGVIDSNDLSLNVSREILQNDSTVESIRTALTKRVLDMLSKLAKKGGDEYQGFWDEFGTVLKEGPAEDFSNREKIAGLLRFASTHTGEATQNVSLDDYISRMKEGQNKIYYITGDNFAAAKSSPHLEVFRKKGIEVLILSDRIDEWMMGYLSEYDGKQFQDVARGDLDLGEVETEEDKKHQEEAAKEHKDLLERIKTALEDQVQEVRVTNRLTDSPACLVVGQFDMGAQMKKIMEAAGQKVPESKPIFEINVDHPLVQRLETEQGEQRFKELSAVLFDQATLASGEQLKDPGAYVSRLNRLLLELAN.

Positions M1–R338 are a; substrate-binding. Residues E339–K555 form a b region. The segment at I556 to N630 is c.

This sequence belongs to the heat shock protein 90 family. As to quaternary structure, homodimer.

Its subcellular location is the cytoplasm. Its function is as follows. Molecular chaperone. Has ATPase activity. The polypeptide is Chaperone protein HtpG (Marinobacter nauticus (strain ATCC 700491 / DSM 11845 / VT8) (Marinobacter aquaeolei)).